Here is a 303-residue protein sequence, read N- to C-terminus: Aspartate carbamoyltransferase catalytic subunit (303 aa).

Carbamoyl phosphate is bound by residues Arg49 and Thr50. An L-aspartate-binding site is contributed by Lys77. Arg99, His126, and Gln129 together coordinate carbamoyl phosphate. Residues Arg159 and Arg211 each contribute to the L-aspartate site. Ser252 and Pro253 together coordinate carbamoyl phosphate.

This sequence belongs to the aspartate/ornithine carbamoyltransferase superfamily. ATCase family. Heterododecamer (2C3:3R2) of six catalytic PyrB chains organized as two trimers (C3), and six regulatory PyrI chains organized as three dimers (R2).

It carries out the reaction carbamoyl phosphate + L-aspartate = N-carbamoyl-L-aspartate + phosphate + H(+). It participates in pyrimidine metabolism; UMP biosynthesis via de novo pathway; (S)-dihydroorotate from bicarbonate: step 2/3. Catalyzes the condensation of carbamoyl phosphate and aspartate to form carbamoyl aspartate and inorganic phosphate, the committed step in the de novo pyrimidine nucleotide biosynthesis pathway. The protein is Aspartate carbamoyltransferase catalytic subunit of Listeria innocua serovar 6a (strain ATCC BAA-680 / CLIP 11262).